Reading from the N-terminus, the 446-residue chain is Chromosomal replication initiator protein DnaA (446 aa).

Residues 1–92 (MENISDLWNS…SQAEEEIDLP (92 aa)) form a domain I, interacts with DnaA modulators region. The disordered stretch occupies residues 87-107 (EEIDLPPSKPNSAQDDSNHLP). Residues 93–109 (PSKPNSAQDDSNHLPQS) form a domain II region. Residues 96–107 (PNSAQDDSNHLP) show a composition bias toward polar residues. The segment at 110 to 326 (MLNPKYTFDT…GALIRVVAYS (217 aa)) is domain III, AAA+ region. ATP is bound by residues glycine 154, glycine 156, lysine 157, and threonine 158. The segment at 327 to 446 (SLINKDINAD…QVEEINDILK (120 aa)) is domain IV, binds dsDNA.

It belongs to the DnaA family. As to quaternary structure, oligomerizes as a right-handed, spiral filament on DNA at oriC.

The protein localises to the cytoplasm. Its function is as follows. Plays an essential role in the initiation and regulation of chromosomal replication. ATP-DnaA binds to the origin of replication (oriC) to initiate formation of the DNA replication initiation complex once per cell cycle. Binds the DnaA box (a 9 base pair repeat at the origin) and separates the double-stranded (ds)DNA. Forms a right-handed helical filament on oriC DNA; dsDNA binds to the exterior of the filament while single-stranded (ss)DNA is stabiized in the filament's interior. The ATP-DnaA-oriC complex binds and stabilizes one strand of the AT-rich DNA unwinding element (DUE), permitting loading of DNA polymerase. After initiation quickly degrades to an ADP-DnaA complex that is not apt for DNA replication. Binds acidic phospholipids. The sequence is that of Chromosomal replication initiator protein DnaA from Bacillus cereus (strain ATCC 10987 / NRS 248).